A 360-amino-acid polypeptide reads, in one-letter code: Beta-1,3-N-acetylglucosaminyltransferase manic fringe (360 aa).

Residues 1–5 (MILRR) lie on the Cytoplasmic side of the membrane. Residues 6-26 (LFHVLPAFAFTLFILVLLDLQ) form a helical; Signal-anchor for type II membrane protein membrane-spanning segment. The Lumenal portion of the chain corresponds to 27 to 360 (LRTRSDQKPQ…ALSWNQHVMH (334 aa)). The interval 51-74 (TTAENQHRDGAHEKEKAEGQKWTE) is disordered. Basic and acidic residues predominate over residues 55 to 74 (NQHRDGAHEKEKAEGQKWTE). Arginine 100 serves as a coordination point for substrate. 2 disulfide bridges follow: cysteine 139/cysteine 150 and cysteine 168/cysteine 231. Aspartate 172 contacts substrate. Aspartate 173 lines the Mn(2+) pocket. N-linked (GlcNAc...) asparagine glycosylation occurs at asparagine 214. Residue aspartate 261 is part of the active site. Position 285 (histidine 285) interacts with Mn(2+). A disulfide bond links cysteine 335 and cysteine 344.

This sequence belongs to the glycosyltransferase 31 family. The cofactor is Mn(2+).

It localises to the golgi apparatus membrane. The enzyme catalyses 3-O-(alpha-L-fucosyl)-L-threonyl-[EGF-like domain protein] + UDP-N-acetyl-alpha-D-glucosamine = 3-O-(N-acetyl-beta-D-glucosaminyl-(1-&gt;3)-alpha-L-fucosyl)-L-threonyl-[EGF-like domain protein] + UDP + H(+). It catalyses the reaction 3-O-(alpha-L-fucosyl)-L-seryl-[EGF-like domain protein] + UDP-N-acetyl-alpha-D-glucosamine = 3-O-(N-acetyl-beta-D-glucosaminyl-(1-&gt;3)-alpha-L-fucosyl)-L-seryl-[EGF-like domain protein] + UDP + H(+). In terms of biological role, glycosyltransferase that initiates the elongation of O-linked fucose residues attached to EGF-like repeats in the extracellular domain of Notch molecules. In Danio rerio (Zebrafish), this protein is Beta-1,3-N-acetylglucosaminyltransferase manic fringe.